The sequence spans 361 residues: Chorismate synthase (361 aa).

The NADP(+) site is built by R48 and R54. FMN contacts are provided by residues 125 to 127, 238 to 239, G278, 293 to 297, and R319; these read RSS, NA, and KPTSS.

Belongs to the chorismate synthase family. In terms of assembly, homotetramer. FMNH2 is required as a cofactor.

The catalysed reaction is 5-O-(1-carboxyvinyl)-3-phosphoshikimate = chorismate + phosphate. The protein operates within metabolic intermediate biosynthesis; chorismate biosynthesis; chorismate from D-erythrose 4-phosphate and phosphoenolpyruvate: step 7/7. Functionally, catalyzes the anti-1,4-elimination of the C-3 phosphate and the C-6 proR hydrogen from 5-enolpyruvylshikimate-3-phosphate (EPSP) to yield chorismate, which is the branch point compound that serves as the starting substrate for the three terminal pathways of aromatic amino acid biosynthesis. This reaction introduces a second double bond into the aromatic ring system. This Salmonella typhi protein is Chorismate synthase.